A 475-amino-acid chain; its full sequence is ATP synthase subunit beta, chloroplastic (475 aa).

ATP is bound at residue 155–162 (GGAGVGKT).

Belongs to the ATPase alpha/beta chains family. As to quaternary structure, F-type ATPases have 2 components, CF(1) - the catalytic core - and CF(0) - the membrane proton channel. CF(1) has five subunits: alpha(3), beta(3), gamma(1), delta(1), epsilon(1). CF(0) has four main subunits: a(1), b(1), b'(1) and c(9-12).

It localises to the plastid. The protein resides in the chloroplast thylakoid membrane. It catalyses the reaction ATP + H2O + 4 H(+)(in) = ADP + phosphate + 5 H(+)(out). In terms of biological role, produces ATP from ADP in the presence of a proton gradient across the membrane. The catalytic sites are hosted primarily by the beta subunits. This Porphyra purpurea (Red seaweed) protein is ATP synthase subunit beta, chloroplastic.